A 295-amino-acid chain; its full sequence is MMRILLFLATNLAVVLIASITLSLFGFNGFMAANGVDLNLNQLLVFCAVFGFAGSLFSLFISKWMAKMSTGTQIISQPRTRHEQWLLQTVEQLSRDAGIKMPEVGIFPAYEANAFATGWNKNDALVAVSQGLLERFSPDEVKAVLAHEIGHVANGDMVTLALVQGVVNTFVMFFARIIGNFVDKVIFKTENGQGIAYYITTIFAELVLGFLASAIVMWFSRKREFRADDAGARLAGTGAMIGALQRLRSEQGVPVNMPDSLTAFGINAGLKKGLAGLFMSHPPLEQRIEALRRRG.

2 helical membrane-spanning segments follow: residues 4–24 (ILLF…TLSL) and 42–62 (QLLV…LFIS). Histidine 147 is a binding site for Zn(2+). Glutamate 148 is a catalytic residue. Histidine 151 is a Zn(2+) binding site. 2 consecutive transmembrane segments (helical) span residues 158-178 (VTLA…ARII) and 199-219 (ITTI…VMWF). A Zn(2+)-binding site is contributed by glutamate 224.

It belongs to the peptidase M48B family. The cofactor is Zn(2+).

The protein localises to the cell inner membrane. The protein is Protease HtpX of Pseudomonas syringae pv. syringae (strain B728a).